Reading from the N-terminus, the 364-residue chain is Aminomethyltransferase (364 aa).

Belongs to the GcvT family. In terms of assembly, the glycine cleavage system is composed of four proteins: P, T, L and H.

It catalyses the reaction N(6)-[(R)-S(8)-aminomethyldihydrolipoyl]-L-lysyl-[protein] + (6S)-5,6,7,8-tetrahydrofolate = N(6)-[(R)-dihydrolipoyl]-L-lysyl-[protein] + (6R)-5,10-methylene-5,6,7,8-tetrahydrofolate + NH4(+). In terms of biological role, the glycine cleavage system catalyzes the degradation of glycine. The sequence is that of Aminomethyltransferase from Salmonella dublin (strain CT_02021853).